A 310-amino-acid polypeptide reads, in one-letter code: Olfactory receptor 1496 (310 aa).

The Extracellular segment spans residues 1 to 23 (MNNQTFITQFLLLGLPIPEEHQH). Asn3 carries an N-linked (GlcNAc...) asparagine glycan. Residues 24-48 (LFYALFLVMYLTTILGNLLIIVLVQ) form a helical membrane-spanning segment. The Cytoplasmic segment spans residues 49-55 (LDSQLHT). A helical transmembrane segment spans residues 56-77 (PMYLFLSNLSFSDLCFSSVTMP). At 78–98 (KLLQNMRSQDTSIPYGGCLAQ) the chain is on the extracellular side. Cys95 and Cys187 form a disulfide bridge. A helical transmembrane segment spans residues 99–118 (TYFFMVFGDMESFLLVAMAY). The Cytoplasmic portion of the chain corresponds to 119-137 (DRYVAICFPLHYTSIMSPK). Residues 138–156 (LCTCLVLLLWMLTTSHAMM) traverse the membrane as a helical segment. The Extracellular segment spans residues 157–194 (HTLLAARLSFCENNVVLNFFCDLFVLLKLACSDTYINE). A helical membrane pass occupies residues 195–217 (LMIFIMSTLLIIIPFFLIVMSYA). Residues 218-234 (RIISSILKVPSTQGICK) lie on the Cytoplasmic side of the membrane. Residues 235–258 (VFSTCGSHLSVVSLFYGTIIGLYL) traverse the membrane as a helical segment. Topologically, residues 259-270 (CPAGNNSTVKEM) are extracellular. Residues 271-290 (VMAMMYTVVTPMLNPFIYSL) form a helical membrane-spanning segment. At 291–310 (RNRDMKRALIRVICSMKITL) the chain is on the cytoplasmic side.

It belongs to the G-protein coupled receptor 1 family. In terms of tissue distribution, olfactory epithelium.

It is found in the cell membrane. Functionally, odorant receptor. In Rattus norvegicus (Rat), this protein is Olfactory receptor 1496 (Olr1496).